Reading from the N-terminus, the 417-residue chain is Xylulose 5-phosphate/phosphate translocator, chloroplastic (417 aa).

The transit peptide at 1–82 (MISLNLSPSL…GFSRKPRSIA (82 aa)) directs the protein to the chloroplast. Residues 66–102 (TNPESSSGFSRKPRSIAAVGSSDSNPDEKSDLGEAEK) are disordered. An N-acetylalanine modification is found at Ala83. The segment covering 91 to 102 (PDEKSDLGEAEK) has biased composition (basic and acidic residues). 9 consecutive transmembrane segments (helical) span residues 109–129 (TLQLGIVFGLWYFQNIVFNIF), 141–161 (WLLASFQLFAGSIWMLVLWSF), 173–193 (FIIALLGPALFHTIGHISACV), 198–218 (VAVSFTHVIKSAEPVFSVIFS), 225–245 (YPLAVWLSILPIVMGCSLAAV), 247–267 (EVSFNLGGLSGAMISNVGFVL), 287–307 (LYGCISILSLLYLFPVAIFVE), 318–338 (AIASVGTPSTFYFWVLLSGVF), and 384–404 (LNALGSAIAIFGTFLYSQATA). The EamA domain occupies 127–243 (NIFNKKALNV…LPIVMGCSLA (117 aa)).

Belongs to the TPT transporter family. TPT (TC 2.A.7.9) subfamily. In terms of tissue distribution, widely expressed.

It is found in the plastid. The protein resides in the chloroplast membrane. In terms of biological role, sugar phosphate/phosphate translocator that transports inorganic phosphate, triose phosphate, 3-phosphoglycerate, xylulose 5-phosphate (Xul-5-P) and to a lesser extent ribulose 5-phosphate. Does not transport ribose 5-phosphate or hexose phosphates. Provides cytosolic Xul-5-P to the chloroplast, where it is used as an intermediate in the plastidic pentose phosphate pathways. The sequence is that of Xylulose 5-phosphate/phosphate translocator, chloroplastic (XPT) from Arabidopsis thaliana (Mouse-ear cress).